A 379-amino-acid chain; its full sequence is MSDFLPFSRPAMGAEELAAVKTVLDSGWITTGPKNQELEAAFCRLTGNQYAVAVSSATAGMHIALMALGIGEGDEVITPSMTWVSTLNMIVLLGATPVMVDVDRDTLMVTPEHIEAAITPQTKAIIPVHYAGAPADLDAIYALGERYGIPVIEDAAHATGTSYKGRHIGARGTAIFSFHAIKNITCAEGGIVVTDNPQFADKLRSLKFHGLGVDAWDRQCGGRAPQAEVLAPGYKYNLPDLNAAIALAQLQKLDALNARRAAIAAQYHQAMADLPFQPLSLPSWEHIHAWHLFIIRVDEARCGITRDALMASLKTKGIGTGLHFRAAHTQKYYRERFPTLTLPDTEWNSERICSLPLFPDMTESDFDRVITALHQIAGQ.

An N6-(pyridoxal phosphate)lysine modification is found at K182.

This sequence belongs to the DegT/DnrJ/EryC1 family. ArnB subfamily. As to quaternary structure, homodimer. Requires pyridoxal 5'-phosphate as cofactor.

It catalyses the reaction UDP-4-amino-4-deoxy-beta-L-arabinose + 2-oxoglutarate = UDP-beta-L-threo-pentopyranos-4-ulose + L-glutamate. It participates in nucleotide-sugar biosynthesis; UDP-4-deoxy-4-formamido-beta-L-arabinose biosynthesis; UDP-4-deoxy-4-formamido-beta-L-arabinose from UDP-alpha-D-glucuronate: step 2/3. The protein operates within bacterial outer membrane biogenesis; lipopolysaccharide biosynthesis. Catalyzes the conversion of UDP-4-keto-arabinose (UDP-Ara4O) to UDP-4-amino-4-deoxy-L-arabinose (UDP-L-Ara4N). The modified arabinose is attached to lipid A and is required for resistance to polymyxin and cationic antimicrobial peptides. This chain is UDP-4-amino-4-deoxy-L-arabinose--oxoglutarate aminotransferase, found in Salmonella dublin (strain CT_02021853).